Here is a 488-residue protein sequence, read N- to C-terminus: Malonate-semialdehyde dehydrogenase (488 aa).

NAD(+) is bound by residues Ala-150, Phe-152, Lys-176, Glu-179, Arg-180, Ser-229, and Thr-251. Cys-284 serves as the catalytic Nucleophile. Glu-382 contributes to the NAD(+) binding site.

Belongs to the aldehyde dehydrogenase family. IolA subfamily. Homotetramer.

The catalysed reaction is 3-oxopropanoate + NAD(+) + CoA + H2O = hydrogencarbonate + acetyl-CoA + NADH + H(+). The enzyme catalyses 2-methyl-3-oxopropanoate + NAD(+) + CoA + H2O = propanoyl-CoA + hydrogencarbonate + NADH + H(+). It participates in polyol metabolism; myo-inositol degradation into acetyl-CoA; acetyl-CoA from myo-inositol: step 7/7. Functionally, catalyzes the oxidation of malonate semialdehyde (MSA) and methylmalonate semialdehyde (MMSA) into acetyl-CoA and propanoyl-CoA, respectively. Is involved in a myo-inositol catabolic pathway. Bicarbonate, and not CO2, is the end-product of the enzymatic reaction. This Listeria monocytogenes serotype 4b (strain CLIP80459) protein is Malonate-semialdehyde dehydrogenase.